Here is a 424-residue protein sequence, read N- to C-terminus: S-phase kinase-associated protein 2 (424 aa).

A mediates interaction with hepatitis C virus non-structural protein NS5A region spans residues 1–220 (MHRKHLQEIP…LSLEGLRLSD (220 aa)). Residues 39 to 73 (SALEKEEPDSENIPQELLSNLGHPESPPRKRLKSK) form a disordered region. Position 64 is a phosphoserine (Ser-64). The Nuclear localization signal signature appears at 67–73 (RKRLKSK). N6-acetyllysine; by p300/EP300 occurs at positions 68 and 71. A phosphoserine mark is found at Ser-72 and Ser-75. An F-box domain is found at 94–140 (GVSWDSLPDELLLGIFSCLCLPELLKVSGVCKRWYRLASDESLWQTL). 10 LRR repeats span residues 151–176 (VTGR…PLAE), 177–204 (HFSP…ILSQ), 210–234 (NLSL…NLVR), 235–257 (LNLS…SCSR), 258–284 (LDEL…VSET), 286–308 (TQLN…LVRR), 309–330 (CPNL…CFQE), 334–356 (LNYL…LLEL), 359–378 (IPTL…TLQL), and 380–401 (KEAL…RPTI). Ser-179 is subject to Phosphoserine. Residues 402–424 (GNKKNQEIWGIKCRLTLQKPSCL) form a mediates interaction with IFI27 region.

In terms of assembly, part of a SCF(SKP2) complex consisting of CUL1, RBX1, SKP1 and SKP2. Component of a SCF(SKP2)-like complex containing CUL1, SKP1, TRIM21 and SKP2. Interacts directly with CUL1 and SKP1. Interacts with CKS1. Interacts with ASB2 which is the substrate-recognition component of a probable ECS E3 ubiquitin-protein ligase complex; ASB2 is likely to bridge the formation of dimeric E3-ubiquitin-protein ligase complexes composed of an ECS complex and an SCF(SKP2) complex. Interacts with the cyclin-A-CDK2 complex. Interacts with ORC1, phosphorylated CDT1, phosphorylated RBL2, ELF4, phosphorylated RAG2, FOXO1, UBP43, MYC, TOB1, TAL1 and KMT2A/MLL1. Interacts with TRIM21. Interacts with cyclin-E. Interacts with IFI27; promotes the ubiquitin-mediated proteasomal degradation of hepatitis C virus/HCV non-structural protein NS5A. Interacts with CARM1. As to quaternary structure, (Microbial infection) Interacts with hepatitis C virus/HCV non-structural protein NS5A; promotes the ubiquitin-mediated proteasomal degradation of NS5A. Post-translationally, phosphorylated on serine and threonine resudues in response to DNA damage, promoting 'Lys-63'-linked ubiquitination of NBN. Ubiquitinated by the APC/C complex, leading to its degradation by the proteasome. Deubiquitinated by USP13. In terms of processing, acetylation at Lys-68 and Lys-71 increases stability through impairment of APC/C-mediated proteolysis and promotes cytoplasmic retention. Deacetylated by SIRT3.

Its subcellular location is the cytoplasm. The protein resides in the nucleus. The protein operates within protein modification; protein ubiquitination. Its function is as follows. Substrate recognition component of a SCF (SKP1-CUL1-F-box protein) E3 ubiquitin-protein ligase complex which mediates the ubiquitination and subsequent proteasomal degradation of target proteins involved in cell cycle progression, signal transduction and transcription. Specifically recognizes phosphorylated CDKN1B/p27kip and is involved in regulation of G1/S transition. Degradation of CDKN1B/p27kip also requires CKS1. Recognizes target proteins ORC1, CDT1, RBL2, KMT2A/MLL1, CDK9, RAG2, NBN, FOXO1, UBP43, YTHDF2, and probably MYC, TOB1 and TAL1. Degradation of TAL1 also requires STUB1. Recognizes CDKN1A in association with CCNE1 or CCNE2 and CDK2. Promotes ubiquitination and destruction of CDH1 in a CK1-dependent manner, thereby regulating cell migration. Following phosphorylation in response to DNA damage, mediates 'Lys-63'-linked ubiquitination of NBN, promoting ATM recruitment to DNA damage sites and DNA repair via homologous recombination. Through the ubiquitin-mediated proteasomal degradation of hepatitis C virus non-structural protein 5A, has an antiviral activity towards that virus. In Homo sapiens (Human), this protein is S-phase kinase-associated protein 2 (SKP2).